We begin with the raw amino-acid sequence, 65 residues long: Large ribosomal subunit protein bL35 (65 aa).

The tract at residues 1–22 (MPKLKTKSGAAKRFKKTGKGGF) is disordered.

This sequence belongs to the bacterial ribosomal protein bL35 family.

The sequence is that of Large ribosomal subunit protein bL35 from Francisella philomiragia subsp. philomiragia (strain ATCC 25017 / CCUG 19701 / FSC 153 / O#319-036).